A 321-amino-acid chain; its full sequence is MINLFLLKYKTAFSTFLKPFAYLSLILSVCFYSIQAQAFPVFAQQAYENPREATGRIVCANCHLAQKPVEIEVPQAVLPDTVFEAVVEVPYDLSLQQVTGNGTKGPLNVGAVVILPEGFTLAPKDRISSELKEKTKGLIITPYNEANPNILVVGPVPGKDHQKLVFPVLSPNPAENKNVHFIKYPVYVGANRGRGQVNPTGEKSNNTVYTSPIDGQIVKLEKSDNVTSFSIKSKTGDIITVKVPFGPDILVKEGQTLVADQQLTNDPNVGGFGQVETEIVLQSPARVKGLIAFFFTVILAQILLVLKKKQFEKVQLAEMNF.

The signal sequence occupies residues 1-38 (MINLFLLKYKTAFSTFLKPFAYLSLILSVCFYSIQAQA). Heme contacts are provided by Phe-39, Cys-59, Cys-62, and His-63. Residues 287 to 306 (VKGLIAFFFTVILAQILLVL) form a helical membrane-spanning segment.

It belongs to the cytochrome f family. As to quaternary structure, the 4 large subunits of the cytochrome b6-f complex are cytochrome b6, subunit IV (17 kDa polypeptide, petD), cytochrome f and the Rieske protein, while the 4 small subunits are PetG, PetL, PetM and PetN. The complex functions as a dimer. Heme is required as a cofactor.

It is found in the plastid. The protein resides in the chloroplast thylakoid membrane. Functionally, component of the cytochrome b6-f complex, which mediates electron transfer between photosystem II (PSII) and photosystem I (PSI), cyclic electron flow around PSI, and state transitions. In Guillardia theta (Cryptophyte), this protein is Cytochrome f (petA).